Consider the following 225-residue polypeptide: Glutathione S-transferase U3 (225 aa).

The GST N-terminal domain occupies 6 to 86 (EGVKLIGSWA…YIDQTWTNNP (81 aa)). Glutathione is bound by residues 16–17 (SP), 43–44 (VK), 57–58 (KV), and 70–71 (ES). The 128-residue stretch at 91–218 (SPYDKAMARF…EKHIEHMMKI (128 aa)) folds into the GST C-terminal domain. Thr-152 is modified (phosphothreonine).

It belongs to the GST superfamily. Tau family.

The protein localises to the cytoplasm. Its subcellular location is the cytosol. The catalysed reaction is RX + glutathione = an S-substituted glutathione + a halide anion + H(+). Its function is as follows. May be involved in the conjugation of reduced glutathione to a wide number of exogenous and endogenous hydrophobic electrophiles and have a detoxification role against certain herbicides. This chain is Glutathione S-transferase U3 (GSTU3), found in Arabidopsis thaliana (Mouse-ear cress).